The following is a 120-amino-acid chain: NAD(P)H-quinone oxidoreductase subunit 3, chloroplastic (120 aa).

Helical transmembrane passes span 9-29, 64-84, and 88-108; these read FFWA…LISG, MFAL…PWAM, and VLGV…IIGL.

The protein belongs to the complex I subunit 3 family. NDH is composed of at least 16 different subunits, 5 of which are encoded in the nucleus.

The protein localises to the plastid. Its subcellular location is the chloroplast thylakoid membrane. The enzyme catalyses a plastoquinone + NADH + (n+1) H(+)(in) = a plastoquinol + NAD(+) + n H(+)(out). It catalyses the reaction a plastoquinone + NADPH + (n+1) H(+)(in) = a plastoquinol + NADP(+) + n H(+)(out). In terms of biological role, NDH shuttles electrons from NAD(P)H:plastoquinone, via FMN and iron-sulfur (Fe-S) centers, to quinones in the photosynthetic chain and possibly in a chloroplast respiratory chain. The immediate electron acceptor for the enzyme in this species is believed to be plastoquinone. Couples the redox reaction to proton translocation, and thus conserves the redox energy in a proton gradient. The protein is NAD(P)H-quinone oxidoreductase subunit 3, chloroplastic of Nicotiana tabacum (Common tobacco).